Consider the following 161-residue polypeptide: Cytochrome b6-f complex subunit 4 (161 aa).

The next 3 helical transmembrane spans lie at 37–57, 96–116, and 132–152; these read LLYI…GLAV, LLGV…PFIE, and SVFL…TLPI.

The protein belongs to the cytochrome b family. PetD subfamily. As to quaternary structure, the 4 large subunits of the cytochrome b6-f complex are cytochrome b6, subunit IV (17 kDa polypeptide, PetD), cytochrome f and the Rieske protein, while the 4 small subunits are PetG, PetL, PetM and PetN. The complex functions as a dimer.

The protein localises to the cellular thylakoid membrane. Component of the cytochrome b6-f complex, which mediates electron transfer between photosystem II (PSII) and photosystem I (PSI), cyclic electron flow around PSI, and state transitions. The sequence is that of Cytochrome b6-f complex subunit 4 from Acaryochloris marina (strain MBIC 11017).